The following is a 435-amino-acid chain: MWRIWRCRLSFLFVTGCLLGALTAGLGSQMSDSVGRNVQAPAGVADASQEAGDVVEERTERTEEQVFAPGPPRRHSSESLFPRNPSVTARRRRNRRITLIATAVGVAVILAALYVLRRRRAQPPQEPEPPTRLRTPRPRAPSGQQQPSESEPPAGVPMKPGSLTLPFTCLGDTKVTFFGPSGRQHGFTPLYDPSPSKRVATVDAGANALFIGGGGLNGQFAKTLLEEAEKNGIRLTSVALSEHSQRIQQSLLRRAVKSPGKLVELDTGVASPVFARSFGFVPVVPGLMWKESKVGANVGVTFIHILKPEVTPYGNLNNNVMMYTVAPCGAPPDTTYSLAYKTTIAGVIRAAAAYNDTPAGQQYPVQGLRLPLLRGGIFRRNRSLESIGRANAEGTSLAITQYGPNFELQYMYDPSNAALHGLQEAESTYLASMLD.

An N-terminal signal peptide occupies residues 1–27 (MWRIWRCRLSFLFVTGCLLGALTAGLG). Residues 28-96 (SQMSDSVGRN…VTARRRRNRR (69 aa)) lie on the Vacuolar side of the membrane. The tract at residues 43–89 (GVADASQEAGDVVEERTERTEEQVFAPGPPRRHSSESLFPRNPSVTA) is disordered. The segment covering 55–64 (VEERTERTEE) has biased composition (basic and acidic residues). The chain crosses the membrane as a helical span at residues 97-117 (ITLIATAVGVAVILAALYVLR). The Cytoplasmic segment spans residues 118–435 (RRRAQPPQEP…ESTYLASMLD (318 aa)). The tract at residues 120-162 (RAQPPQEPEPPTRLRTPRPRAPSGQQQPSESEPPAGVPMKPGS) is disordered.

Its subcellular location is the parasitophorous vacuole membrane. Its function is as follows. During host cell infection by tachyzoites, does not play a role in tethering the parasitophorous vacuole to the host mitochondria. The protein is Mitochondrial association factor 1 form b0 of Toxoplasma gondii.